Consider the following 597-residue polypeptide: Serine/arginine repetitive matrix protein 3 (597 aa).

Positions 1 to 31 are enriched in polar residues; it reads MSSTVNNGAASMQSTPDAANGFPQPSSSSGT. Residues 1 to 47 are disordered; sequence MSSTVNNGAASMQSTPDAANGFPQPSSSSGTWPRAEEELRAAEPGLV. A CWF21 domain is found at 55 to 98; that stretch reads LDHERKRRVELKCMELQEMMEEQGYSEEEIRQKVGTFRQMLMEK. The span at 99-109 shows a compositional bias: basic and acidic residues; it reads EGVLTREDRPG. Residues 99–597 are disordered; sequence EGVLTREDRP…GPAPLPPPAA (499 aa). Composition is skewed to basic residues over residues 149-158, 168-186, 199-211, and 219-243; these read RGHRGYRTKH, PKKK…KKRR, LRKK…KHRR, and RRKR…KKRP. Low complexity-rich tracts occupy residues 257–278 and 291–313; these read SGSS…PSRL and SQRS…SPQR. Gly residues-rich tracts occupy residues 315–328 and 374–383; these read GGSG…GGRP and GRGGRAAGGA. The span at 384–412 shows a compositional bias: basic residues; it reads GRRRRRRRRRRRSRSSASAPRRRGRRRPR. Composition is skewed to low complexity over residues 417–433, 466–476, and 488–507; these read RGSS…SDSG, RPASTSPSPGA, and SSRS…SPSK. Basic and acidic residues predominate over residues 530–549; that stretch reads LSRDKDGEGRARHSEAEATR. The span at 550-565 shows a compositional bias: basic residues; that stretch reads ARRRSRSYSPIRKRRR.

It belongs to the CWC21 family. In terms of tissue distribution, expressed in breast cancer cell lines.

May play a role in regulating breast cancer cell invasiveness. May be involved in RYBP-mediated breast cancer progression. This Homo sapiens (Human) protein is Serine/arginine repetitive matrix protein 3 (SRRM3).